Here is a 200-residue protein sequence, read N- to C-terminus: MSIEVFNESGYDGVNEEMLIDVLSFALGEMDIHPDAEASIHIVDSDTIAELHVKWLDLEGPTDVMSFPMDELTPGYSRPDGGAPGPAMLGDIVLCPEFAEKQATKAGHDLSHELALLTVHGCLHLLGYDHVEPAQEREMFALQNELLADWYDDVDRRGVVYQPKPTGPGAFPTAADRLELDQTMIAEEQGEPGESGASAR.

The Zn(2+) site is built by histidine 120, histidine 124, and histidine 130.

It belongs to the endoribonuclease YbeY family. The cofactor is Zn(2+).

Its subcellular location is the cytoplasm. In terms of biological role, single strand-specific metallo-endoribonuclease involved in late-stage 70S ribosome quality control and in maturation of the 3' terminus of the 16S rRNA. The polypeptide is Endoribonuclease YbeY (Corynebacterium efficiens (strain DSM 44549 / YS-314 / AJ 12310 / JCM 11189 / NBRC 100395)).